The sequence spans 424 residues: Virion nicking-joining enzyme (424 aa).

PLD phosphodiesterase domains follow at residues 110-137 and 320-346; these read LGGV…DWRS and YSRV…TGNY.

It belongs to the orthopoxvirus OPG042 family.

Its subcellular location is the virion. DNA nicking enzyme that cleaves extruded cruciform DNA at its tip. Probably nicks viral hairpins. This chain is Virion nicking-joining enzyme (OPG042), found in Vaccinia virus (strain Western Reserve) (VACV).